A 344-amino-acid polypeptide reads, in one-letter code: Heat-inducible transcription repressor HrcA (344 aa).

The protein belongs to the HrcA family.

Negative regulator of class I heat shock genes (grpE-dnaK-dnaJ and groELS operons). Prevents heat-shock induction of these operons. The chain is Heat-inducible transcription repressor HrcA from Streptococcus pneumoniae serotype 19F (strain G54).